Reading from the N-terminus, the 575-residue chain is Jasmonoyl--L-amino acid synthetase JAR1 (575 aa).

Positions 10–30 form a coiled coil; that stretch reads MNRVIDEFDEMTRNAHQVQKQ. Serine 98 is an ATP binding site. A jasmonate-binding site is contributed by serine 101. Residues methionine 118, threonine 121, glycine 163, asparagine 168, and 331-336 each bind ATP; that span reads GSSEGW. 166–170 serves as a coordination point for an L-alpha-amino acid; it reads TTNVY. 328-331 contacts jasmonate; the sequence is HDYG. Residue 530 to 534 participates in an L-alpha-amino acid binding; that stretch reads KIQEH. Lysine 557 is a binding site for ATP.

It belongs to the IAA-amido conjugating enzyme family. Interacts with GSTU20/FIP1 under continuous far red (cFR) light; this binding increases its activity and determines the priority of substrate binding.

The protein resides in the cytoplasm. It catalyses the reaction a jasmonate + an L-alpha-amino acid + ATP = a jasmonyl-L-amino acid + AMP + diphosphate + H(+). It carries out the reaction (+)-7-isojasmonate + L-isoleucine + ATP = L-isoleucine-(+)-7-isojasmonate + AMP + diphosphate + H(+). With respect to regulation, activated by GSTU20/FIP1. Its function is as follows. Catalyzes the synthesis of jasmonates-amino acid conjugates by adenylation; can use Ile and, in vitro at least, Val, Leu and Phe as conjugating amino acids on jasmonic acid (JA) and 9,10-dihydro-JA substrates, and to a lower extent, on 3-oxo-2-(2Z-pentenyl)-cyclopentane-1-butyric acid (OPC-4) and 12-hydroxy-JA (12-OH-JA). Can synthesize adenosine 5-tetraphosphate in vitro. Required for the JA-mediated signaling pathway that regulates many developmental and defense mechanisms, including growth root inhibition, vegetative storage proteins (VSPs) accumulation, induced systemic resistance (ISR), response to wounding and herbivores, tolerance to ozone O(3) (probably having a role in lesion containment). Plays an important role in the accumulation of JA-Ile in response to wounding, both locally and systemically; promotes JA responding genes especially in distal part of wounded plants, via the JA-Ile-stimulated degradation of JAZ repressor proteins by the SCF(COI)E3 ubiquitin-protein ligase pathway. Involved in the apoptosis-like programmed cell death (PCD) induced by fungal toxin fumonisin B1-mediated (FB1). Required for volatile compounds (C6-aldehydes and allo-ocimene)-mediated defense activation. Involved in the non-pathogenic rhizobacterium-mediated ISR (defense priming) by P.fluorescens (strains CHAOr and WCS417r) and P.putida LSW17S against infection leaf pathogens such as P.syringae pv. tomato and H.parasitica. Required for the JA-dependent resistance to fungi such as P.irregulare, U.vignae and U.appendiculatus. Necessary to induce systemic resistance against R.solanaceraum and P.syringae pv. tomato with P.oligandrum (a non-pathogenic biocontrol agent) cell wall protein fraction (CWP). Mediates PGIP2 accumulation in response to B.cinerea infection and thus contributes to resistance against this pathogen. Modulates the UV-B alteration of leaves attractiveness to diamondback moths P.xylostella leading to insect oviposition. Involved in the regulation of far-red light influence on development, being an actor of the interplay between light and JA signaling. Seems necessary for the salicylic acid (SA)-mediated, NPR1-independent resistance pathway. May contribute to the chitin-elicited pathway. Contributes to the sensitivity toward F.graminearum. This Arabidopsis thaliana (Mouse-ear cress) protein is Jasmonoyl--L-amino acid synthetase JAR1.